The primary structure comprises 284 residues: MLIIESVLLLRQHIRRLRQEGKRIALVPTMGNLHDGHMKLVDEAKASADVVVVSIFVNPMQFDRVDDLARYPRTLQDDCEKLNKRHVDFVFAPTPAEVYPQGTEGQTYVDVPGLSTMLEGASRPGHFRGVSTIVSKLFNLVQPDVACFGEKDFQQLALIRKMVADMGYDIEIIGVPIVRAKDGLALSSRNGYLTADQRKIAPGLYKVLSAVAEKLAAGDRQLDEIIAIAEQELNEKGFRADDIQIRDADTLLELTDASQRAVILMAAWLGQARLIDNRIVTLAQ.

Met-30–His-37 serves as a coordination point for ATP. Catalysis depends on His-37, which acts as the Proton donor. (R)-pantoate is bound at residue Gln-61. Gln-61 serves as a coordination point for beta-alanine. Gly-149 to Asp-152 contacts ATP. Residue Gln-155 participates in (R)-pantoate binding. Residues Val-178 and Leu-186–Arg-189 contribute to the ATP site.

It belongs to the pantothenate synthetase family. As to quaternary structure, homodimer.

The protein localises to the cytoplasm. It carries out the reaction (R)-pantoate + beta-alanine + ATP = (R)-pantothenate + AMP + diphosphate + H(+). The protein operates within cofactor biosynthesis; (R)-pantothenate biosynthesis; (R)-pantothenate from (R)-pantoate and beta-alanine: step 1/1. In terms of biological role, catalyzes the condensation of pantoate with beta-alanine in an ATP-dependent reaction via a pantoyl-adenylate intermediate. The protein is Pantothenate synthetase of Klebsiella pneumoniae subsp. pneumoniae (strain ATCC 700721 / MGH 78578).